The chain runs to 95 residues: Defensin-like protein 232 (95 aa).

The first 26 residues, 1–26 (MRCTTLIMVSFVVSCLLLSLVEESEA), serve as a signal peptide directing secretion. 4 disulfides stabilise this stretch: Cys-33/Cys-94, Cys-43/Cys-68, Cys-51/Cys-84, and Cys-66/Cys-86.

The protein belongs to the DEFL family. Flower buds.

The protein localises to the secreted. In Arabidopsis thaliana (Mouse-ear cress), this protein is Defensin-like protein 232 (SCRL23).